A 156-amino-acid chain; its full sequence is RNA polymerase sigma factor SigS (156 aa).

The Polymerase core binding motif lies at 29-44; sequence EYYQLLLIKMWQLSQI. Positions 126–145 form a DNA-binding region, H-T-H motif; that stretch reads QFEIAEIMSLSLSTIKLIKM.

This sequence belongs to the sigma-70 factor family.

In terms of biological role, sigma factors are initiation factors that promote the attachment of RNA polymerase to specific initiation sites and are then released. Sigma-S contributes to the protection against external stress, thus playing a role in cellular fitness and survival. This Staphylococcus aureus (strain COL) protein is RNA polymerase sigma factor SigS (sigS).